Reading from the N-terminus, the 1394-residue chain is ATP-dependent permease AUS1 (1394 aa).

Over 1–420 (MSISKYFTPV…PLTTIGSYSR (420 aa)) the chain is Cytoplasmic. The region spanning 33–273 (KKSYDAEDSM…FRDTLGIEKD (241 aa)) is the ABC transporter 1 domain. The next 6 helical transmembrane spans lie at 421 to 443 (GSLT…PIAF), 468 to 490 (TVFD…YFLA), 497 to 519 (ARFF…LFAL), 529 to 551 (VANL…VIYL), 558 to 575 (FVWI…EAIL), and 636 to 658 (VWRN…LFAS). The Cytoplasmic portion of the chain corresponds to 659–1080 (QYIKPYFNKD…QYICTKRDMT (422 aa)). The ABC transporter 2 domain maps to 751 to 978 (ISWKNINYTV…YFMSHDNTLV (228 aa)). An ATP-binding site is contributed by 782 to 789 (GESGAGKT). Transmembrane regions (helical) follow at residues 1081–1103 (YVMA…FWHI), 1107–1129 (IIGL…PLIN), 1156–1178 (VLLL…LFFV), 1193–1215 (AGVF…LWLI), 1224–1246 (AAVF…QPYS), and 1346–1368 (FGIE…YLTY). Residues 1369-1394 (VARIWPKVFKIITKVIPHRGKKPVQN) lie on the Cytoplasmic side of the membrane.

This sequence belongs to the ABC transporter superfamily. ABCG family. PDR (TC 3.A.1.205) subfamily.

It is found in the membrane. Transporter involved in the uptake of sterol. The polypeptide is ATP-dependent permease AUS1 (AUS1) (Saccharomyces cerevisiae (strain ATCC 204508 / S288c) (Baker's yeast)).